A 192-amino-acid polypeptide reads, in one-letter code: Nucleoside triphosphate pyrophosphatase (192 aa).

Asp73 functions as the Proton acceptor in the catalytic mechanism.

Belongs to the Maf family. It depends on a divalent metal cation as a cofactor.

It is found in the cytoplasm. The enzyme catalyses a ribonucleoside 5'-triphosphate + H2O = a ribonucleoside 5'-phosphate + diphosphate + H(+). It catalyses the reaction a 2'-deoxyribonucleoside 5'-triphosphate + H2O = a 2'-deoxyribonucleoside 5'-phosphate + diphosphate + H(+). Its function is as follows. Nucleoside triphosphate pyrophosphatase. May have a dual role in cell division arrest and in preventing the incorporation of modified nucleotides into cellular nucleic acids. This chain is Nucleoside triphosphate pyrophosphatase, found in Ehrlichia ruminantium (strain Welgevonden).